Here is a 454-residue protein sequence, read N- to C-terminus: Bifunctional protein GlmU (454 aa).

Positions 1-228 (MTLPLHVVIL…PQDVEGANDP (228 aa)) are pyrophosphorylase. Residues 10–13 (LAAG), Lys24, Gln76, 81–82 (GT), 103–105 (YGD), Gly138, Glu153, Asn168, and Asn226 each bind UDP-N-acetyl-alpha-D-glucosamine. Residue Asp105 coordinates Mg(2+). A Mg(2+)-binding site is contributed by Asn226. The tract at residues 229–249 (WQLAQLERAWQLRAARALCLQ) is linker. The tract at residues 250-454 (GVRMADPARV…IEGWERPKKK (205 aa)) is N-acetyltransferase. 2 residues coordinate UDP-N-acetyl-alpha-D-glucosamine: Arg332 and Lys350. The active-site Proton acceptor is His362. UDP-N-acetyl-alpha-D-glucosamine-binding residues include Tyr365 and Asn376. Acetyl-CoA-binding positions include Ala379, 385–386 (NY), Ser404, Ala422, and Arg439.

In the N-terminal section; belongs to the N-acetylglucosamine-1-phosphate uridyltransferase family. This sequence in the C-terminal section; belongs to the transferase hexapeptide repeat family. Homotrimer. It depends on Mg(2+) as a cofactor.

It localises to the cytoplasm. The catalysed reaction is alpha-D-glucosamine 1-phosphate + acetyl-CoA = N-acetyl-alpha-D-glucosamine 1-phosphate + CoA + H(+). It carries out the reaction N-acetyl-alpha-D-glucosamine 1-phosphate + UTP + H(+) = UDP-N-acetyl-alpha-D-glucosamine + diphosphate. Its pathway is nucleotide-sugar biosynthesis; UDP-N-acetyl-alpha-D-glucosamine biosynthesis; N-acetyl-alpha-D-glucosamine 1-phosphate from alpha-D-glucosamine 6-phosphate (route II): step 2/2. It functions in the pathway nucleotide-sugar biosynthesis; UDP-N-acetyl-alpha-D-glucosamine biosynthesis; UDP-N-acetyl-alpha-D-glucosamine from N-acetyl-alpha-D-glucosamine 1-phosphate: step 1/1. It participates in bacterial outer membrane biogenesis; LPS lipid A biosynthesis. In terms of biological role, catalyzes the last two sequential reactions in the de novo biosynthetic pathway for UDP-N-acetylglucosamine (UDP-GlcNAc). The C-terminal domain catalyzes the transfer of acetyl group from acetyl coenzyme A to glucosamine-1-phosphate (GlcN-1-P) to produce N-acetylglucosamine-1-phosphate (GlcNAc-1-P), which is converted into UDP-GlcNAc by the transfer of uridine 5-monophosphate (from uridine 5-triphosphate), a reaction catalyzed by the N-terminal domain. This is Bifunctional protein GlmU from Xanthomonas campestris pv. campestris (strain 8004).